The following is a 319-amino-acid chain: Type II secretion system protein C 2 (319 aa).

At 1–42 (MARVVFRDARIYLIQWLTKIRHTLNQRQSLNTDKEHLRKIVR) the chain is on the cytoplasmic side. Residues 43–65 (GMFWLMLLIISAKVAHSLWRYFS) traverse the membrane as a helical segment. Over 66 to 319 (FSAEYTAVSP…ARHDISIALR (254 aa)) the chain is Periplasmic.

It belongs to the GSP C family. As to quaternary structure, interacts with outer cell membrane protein GspD2 in the periplasm.

Its subcellular location is the cell inner membrane. In terms of biological role, involved in a type II secretion system (T2SS, formerly general secretion pathway, GSP) for the export of folded proteins across the outer membrane. In Escherichia coli O78:H11 (strain H10407 / ETEC), this protein is Type II secretion system protein C 2 (gspC2).